The primary structure comprises 263 residues: Endonuclease 8 (263 aa).

Proline 2 serves as the catalytic Schiff-base intermediate with DNA. Glutamate 3 serves as the catalytic Proton donor. Catalysis depends on lysine 53, which acts as the Proton donor; for beta-elimination activity. Positions 70, 125, and 169 each coordinate DNA. An FPG-type zinc finger spans residues 229–263 (KVFHRDGEACERCGGIIEKTTLSSRPFYWCPHCQK). The active-site Proton donor; for delta-elimination activity is the arginine 253.

It belongs to the FPG family. It depends on Zn(2+) as a cofactor.

The catalysed reaction is 2'-deoxyribonucleotide-(2'-deoxyribose 5'-phosphate)-2'-deoxyribonucleotide-DNA = a 3'-end 2'-deoxyribonucleotide-(2,3-dehydro-2,3-deoxyribose 5'-phosphate)-DNA + a 5'-end 5'-phospho-2'-deoxyribonucleoside-DNA + H(+). In terms of biological role, involved in base excision repair of DNA damaged by oxidation or by mutagenic agents. Acts as a DNA glycosylase that recognizes and removes damaged bases. Has a preference for oxidized pyrimidines, such as thymine glycol, 5,6-dihydrouracil and 5,6-dihydrothymine. Has AP (apurinic/apyrimidinic) lyase activity and introduces nicks in the DNA strand. Cleaves the DNA backbone by beta-delta elimination to generate a single-strand break at the site of the removed base with both 3'- and 5'-phosphates. The protein is Endonuclease 8 of Salmonella schwarzengrund (strain CVM19633).